A 601-amino-acid chain; its full sequence is Sulfite reductase [NADPH] flavoprotein alpha-component (601 aa).

Residues 65-203 (ITIISASQTG…NYNKWSQDLL (139 aa)) enclose the Flavodoxin-like domain. FMN is bound by residues 71-76 (SQTGNA), 118-121 (STQG), and 154-163 (LGDTSYNLFC). One can recognise an FAD-binding FR-type domain in the interval 236-450 (KNPAEGIILT…IQTNDNFRLP (215 aa)). Residues Thr324, Ile358, 388 to 391 (RLYS), 406 to 408 (TVG), and 421 to 424 (GGAS) each bind FAD. NADP(+) contacts are provided by residues 521–522 (SQ), 527–531 (KIYVQ), and Asp563. Residue Tyr601 coordinates FAD.

The protein belongs to the NADPH-dependent sulphite reductase flavoprotein subunit CysJ family. This sequence in the N-terminal section; belongs to the flavodoxin family. It in the C-terminal section; belongs to the flavoprotein pyridine nucleotide cytochrome reductase family. As to quaternary structure, alpha(8)-beta(8). The alpha component is a flavoprotein, the beta component is a hemoprotein. It depends on FAD as a cofactor. FMN is required as a cofactor.

The catalysed reaction is hydrogen sulfide + 3 NADP(+) + 3 H2O = sulfite + 3 NADPH + 4 H(+). It participates in sulfur metabolism; hydrogen sulfide biosynthesis; hydrogen sulfide from sulfite (NADPH route): step 1/1. Component of the sulfite reductase complex that catalyzes the 6-electron reduction of sulfite to sulfide. This is one of several activities required for the biosynthesis of L-cysteine from sulfate. The flavoprotein component catalyzes the electron flow from NADPH -&gt; FAD -&gt; FMN to the hemoprotein component. In Buchnera aphidicola subsp. Acyrthosiphon pisum (strain APS) (Acyrthosiphon pisum symbiotic bacterium), this protein is Sulfite reductase [NADPH] flavoprotein alpha-component.